A 407-amino-acid polypeptide reads, in one-letter code: Peptidase T (407 aa).

His81 is a Zn(2+) binding site. Residue Asp83 is part of the active site. A Zn(2+)-binding site is contributed by Asp142. Catalysis depends on Glu176, which acts as the Proton acceptor. Zn(2+)-binding residues include Glu177, Asp199, and His381.

The protein belongs to the peptidase M20B family. Requires Zn(2+) as cofactor.

The protein resides in the cytoplasm. It carries out the reaction Release of the N-terminal residue from a tripeptide.. Its function is as follows. Cleaves the N-terminal amino acid of tripeptides. The chain is Peptidase T from Streptococcus pneumoniae (strain ATCC 700669 / Spain 23F-1).